We begin with the raw amino-acid sequence, 2248 residues long: Zinc finger protein lin-13 (2248 aa).

The segment at 1–189 (MDEFELFQQL…TYASQYSRPP (189 aa)) is disordered. Residues 29 to 38 (QQANNNQSAP) are compositionally biased toward polar residues. Residues 54–92 (KQREEEEAQRLADFMQKDMKEPAVKRKRGSEEYKKDPLE) show a composition bias toward basic and acidic residues. Residues 145 to 155 (ELDENYMEENE) are compositionally biased toward acidic residues. A Required for interaction with hpl-2 isoform a motif is present at residues 440–444 (PLVPV). Residues 503–525 (HTCIKCGKTFGTEFMLKHHAQSH) form a C2H2-type 1 zinc finger. Residues 603-665 (KTKKENRNIT…FTSSKQKKKR (63 aa)) form a disordered region. Positions 605-620 (KKENRNITDSNEKEFS) are enriched in basic and acidic residues. 6 C2H2-type zinc fingers span residues 812 to 837 (VRCIDPECKAHLCSVISLKTHLSDVH), 959 to 982 (YSCSWCDREYESLNQFVDHLTRFH), 1140 to 1162 (LMCYMCELTFDSYDELTHHMDDH), 1556 to 1578 (FKCQKCSLAFYTNGSLESHMRDH), 1601 to 1623 (WLCRNCCVVFENQPKYQKHMAIH), and 1657 to 1680 (YSCGTCLCTFASDLALFDHLSVAH). Over residues 1859–1877 (PRSSLQTNGSSMGSVTTNG) the composition is skewed to polar residues. The interval 1859–1900 (PRSSLQTNGSSMGSVTTNGGRVVRPSPPNSMNVTLRRAPPQQ) is disordered.

As to quaternary structure, interacts (via PLVPV motif) with chromobox protein homolog hpl-2 (via chromo (shadow subtype) domain); the interaction is direct and influences localization of hpl-2 to nuclear foci. As to expression, in the L3 stage, expressed in syncytial hypodermal cell 7, body wall muscles, intestinal cells, distal tip cells and many neurons.

Its subcellular location is the nucleus. Its function is as follows. Involved in repression of vulval fate, possibly by a tumor suppressor protein Rb-mediated mechanism. May act in a common pathway with retinoblastoma-like protein homolog lin-35 and hpl-2 to influence the ER stress response in the intestine. Plays a role in recruiting chromobox protein homolog hpl-2 to specific chromatin sites. The polypeptide is Zinc finger protein lin-13 (lin-13) (Caenorhabditis elegans).